A 425-amino-acid chain; its full sequence is Histidine--tRNA ligase 1 (425 aa).

It belongs to the class-II aminoacyl-tRNA synthetase family. In terms of assembly, homodimer.

It is found in the cytoplasm. It catalyses the reaction tRNA(His) + L-histidine + ATP = L-histidyl-tRNA(His) + AMP + diphosphate + H(+). The polypeptide is Histidine--tRNA ligase 1 (Bacillus cereus (strain ZK / E33L)).